We begin with the raw amino-acid sequence, 278 residues long: Small ribosomal subunit protein uS2 (278 aa).

Residues 235–278 (QRRKDHGEGGQQAAGGGRGQRDEINVYQGGRGGRGGGPRQQQAS) are disordered. Composition is skewed to gly residues over residues 243-252 (GGQQAAGGGR) and 263-272 (GGRGGRGGGP).

It belongs to the universal ribosomal protein uS2 family.

This chain is Small ribosomal subunit protein uS2, found in Sorangium cellulosum (strain So ce56) (Polyangium cellulosum (strain So ce56)).